Consider the following 71-residue polypeptide: Small ribosomal subunit protein bS21 (71 aa).

The segment covering Ala-50–Lys-59 has biased composition (basic residues). The tract at residues Ala-50 to Tyr-71 is disordered. Residues Val-60 to Tyr-71 are compositionally biased toward basic and acidic residues.

It belongs to the bacterial ribosomal protein bS21 family.

The sequence is that of Small ribosomal subunit protein bS21 from Pseudomonas entomophila (strain L48).